The following is a 191-amino-acid chain: Large ribosomal subunit protein uL5 (191 aa).

This sequence belongs to the universal ribosomal protein uL5 family. In terms of assembly, part of the 50S ribosomal subunit; part of the 5S rRNA/L5/L18/L25 subcomplex. Contacts the 5S rRNA and the P site tRNA. Forms a bridge to the 30S subunit in the 70S ribosome.

In terms of biological role, this is one of the proteins that bind and probably mediate the attachment of the 5S RNA into the large ribosomal subunit, where it forms part of the central protuberance. In the 70S ribosome it contacts protein S13 of the 30S subunit (bridge B1b), connecting the 2 subunits; this bridge is implicated in subunit movement. Contacts the P site tRNA; the 5S rRNA and some of its associated proteins might help stabilize positioning of ribosome-bound tRNAs. In Thermobifida fusca (strain YX), this protein is Large ribosomal subunit protein uL5.